The following is a 47-amino-acid chain: PhoP/PhoQ regulator MgrB (47 aa).

The chain crosses the membrane as a helical span at residues 6 to 26 (WLVLIVVVLACLVLWAQVINI).

Belongs to the MgrB family. As to quaternary structure, may form homooligomers. Probably interacts with the periplasmic domain of PhoQ.

Its subcellular location is the cell inner membrane. PhoP-regulated transcription is redox-sensitive, being activated when the periplasm becomes more reducing. MgrB acts between DsbA/DsbB and PhoP/PhoQ in this pathway. Represses PhoP/PhoQ signaling, possibly by binding to the periplasmic domain of PhoQ, altering its activity and that of downstream effector PhoP. The protein is PhoP/PhoQ regulator MgrB of Escherichia fergusonii (strain ATCC 35469 / DSM 13698 / CCUG 18766 / IAM 14443 / JCM 21226 / LMG 7866 / NBRC 102419 / NCTC 12128 / CDC 0568-73).